The following is a 145-amino-acid chain: 3-dehydroquinate dehydratase (145 aa).

The active-site Proton acceptor is tyrosine 23. The substrate site is built by asparagine 74, histidine 80, and aspartate 87. Histidine 100 functions as the Proton donor in the catalytic mechanism. Substrate contacts are provided by residues 101–102 (LS) and arginine 111.

Belongs to the type-II 3-dehydroquinase family. In terms of assembly, homododecamer.

The enzyme catalyses 3-dehydroquinate = 3-dehydroshikimate + H2O. It participates in metabolic intermediate biosynthesis; chorismate biosynthesis; chorismate from D-erythrose 4-phosphate and phosphoenolpyruvate: step 3/7. Catalyzes a trans-dehydration via an enolate intermediate. The polypeptide is 3-dehydroquinate dehydratase (Bacillus licheniformis (strain ATCC 14580 / DSM 13 / JCM 2505 / CCUG 7422 / NBRC 12200 / NCIMB 9375 / NCTC 10341 / NRRL NRS-1264 / Gibson 46)).